Consider the following 343-residue polypeptide: Vancomycin/teicoplanin A-type resistance protein VanA (343 aa).

ATP contacts are provided by residues Lys-133, 169–171, 177–178, 207–214, and Phe-241; these read FVK, SS, and EQAVSGCE. The ATP-grasp domain occupies 137-338; that stretch reads YIVAKNAGIA…LPELIDRLIV (202 aa). Residue His-244 coordinates substrate. Residue 304 to 305 participates in ATP binding; the sequence is NE. Residues Glu-305 and Asn-307 each coordinate Mg(2+).

It belongs to the D-alanine--D-alanine ligase family. The cofactor is Mg(2+). It depends on Mn(2+) as a cofactor.

It localises to the cell membrane. It catalyses the reaction (R)-lactate + D-alanine + ATP = D-alanyl-(R)-lactate + ADP + phosphate. Functionally, required for high-level resistance to glycopeptide antibiotics. D-Ala--D-Ala ligase of altered specificity which catalyzes ester bond formation between D-Ala and various D-hydroxy acids; produces a peptidoglycan which does not terminate in D-alanine but in D-lactate, thus preventing vancomycin or teicoplanin binding. The polypeptide is Vancomycin/teicoplanin A-type resistance protein VanA (vanA) (Enterococcus faecium (Streptococcus faecium)).